The primary structure comprises 580 residues: Probable inactive 1-aminocyclopropane-1-carboxylate synthase-like protein 2 (580 aa).

A disordered region spans residues 1–43; it reads MSENRNEGSSQAAKANSDTQTPSHFKVTHPRLRDQLKKKSSKK. Polar residues predominate over residues 7 to 23; the sequence is EGSSQAAKANSDTQTPS. N6-(pyridoxal phosphate)lysine is present on K417.

This sequence belongs to the class-I pyridoxal-phosphate-dependent aminotransferase family.

The polypeptide is Probable inactive 1-aminocyclopropane-1-carboxylate synthase-like protein 2 (Accsl) (Mus musculus (Mouse)).